Consider the following 340-residue polypeptide: Phosphate acyltransferase (340 aa).

The protein belongs to the PlsX family. Homodimer. Probably interacts with PlsY.

The protein resides in the cytoplasm. The catalysed reaction is a fatty acyl-[ACP] + phosphate = an acyl phosphate + holo-[ACP]. Its pathway is lipid metabolism; phospholipid metabolism. Its function is as follows. Catalyzes the reversible formation of acyl-phosphate (acyl-PO(4)) from acyl-[acyl-carrier-protein] (acyl-ACP). This enzyme utilizes acyl-ACP as fatty acyl donor, but not acyl-CoA. This is Phosphate acyltransferase from Pseudomonas savastanoi pv. phaseolicola (strain 1448A / Race 6) (Pseudomonas syringae pv. phaseolicola (strain 1448A / Race 6)).